The following is a 364-amino-acid chain: UDP-N-acetylglucosamine--N-acetylmuramyl-(pentapeptide) pyrophosphoryl-undecaprenol N-acetylglucosamine transferase 1 (364 aa).

Residues 10-12 (TGG), Asn-124, Ser-195, Ile-250, and Gln-295 each bind UDP-N-acetyl-alpha-D-glucosamine.

The protein belongs to the glycosyltransferase 28 family. MurG subfamily.

It is found in the cell membrane. The catalysed reaction is di-trans,octa-cis-undecaprenyl diphospho-N-acetyl-alpha-D-muramoyl-L-alanyl-D-glutamyl-meso-2,6-diaminopimeloyl-D-alanyl-D-alanine + UDP-N-acetyl-alpha-D-glucosamine = di-trans,octa-cis-undecaprenyl diphospho-[N-acetyl-alpha-D-glucosaminyl-(1-&gt;4)]-N-acetyl-alpha-D-muramoyl-L-alanyl-D-glutamyl-meso-2,6-diaminopimeloyl-D-alanyl-D-alanine + UDP + H(+). It participates in cell wall biogenesis; peptidoglycan biosynthesis. Cell wall formation. Catalyzes the transfer of a GlcNAc subunit on undecaprenyl-pyrophosphoryl-MurNAc-pentapeptide (lipid intermediate I) to form undecaprenyl-pyrophosphoryl-MurNAc-(pentapeptide)GlcNAc (lipid intermediate II). The protein is UDP-N-acetylglucosamine--N-acetylmuramyl-(pentapeptide) pyrophosphoryl-undecaprenol N-acetylglucosamine transferase 1 of Bacillus anthracis.